Here is a 291-residue protein sequence, read N- to C-terminus: Pentonolactonase XacC (291 aa).

Positions 15, 141, and 191 each coordinate a divalent metal cation. The Proton donor/acceptor role is filled by aspartate 191.

The protein belongs to the SMP-30/CGR1 family. In terms of assembly, monomer. The cofactor is a divalent metal cation.

The catalysed reaction is L-arabinono-1,4-lactone + H2O = L-arabinonate + H(+). It carries out the reaction D-xylono-1,4-lactone + H2O = D-xylonate + H(+). The protein operates within carbohydrate degradation. Functionally, pentonolactonase involved in D-arabinose and D-xylose catabolism. Catalyzes the hydrolysis of both L-arabino-gamma-lactone and D-xylono-gamma-lactone to the corresponding acids. Can also hydrolyze D-galactono-gamma-lactone and D-glucono-delta-lactone. The protein is Pentonolactonase XacC of Haloferax volcanii (strain ATCC 29605 / DSM 3757 / JCM 8879 / NBRC 14742 / NCIMB 2012 / VKM B-1768 / DS2) (Halobacterium volcanii).